Reading from the N-terminus, the 217-residue chain is Small ribosomal subunit protein uS3c (217 aa).

The KH type-2 domain occupies 47–118 (IQKHVKSVSN…NLRVTLTGVI (72 aa)).

Belongs to the universal ribosomal protein uS3 family. Part of the 30S ribosomal subunit.

Its subcellular location is the plastid. The protein resides in the chloroplast. The protein is Small ribosomal subunit protein uS3c (rps3) of Adiantum capillus-veneris (Maidenhair fern).